The following is a 92-amino-acid chain: Small ribosomal subunit protein uS19 (92 aa).

The protein belongs to the universal ribosomal protein uS19 family.

Protein S19 forms a complex with S13 that binds strongly to the 16S ribosomal RNA. The protein is Small ribosomal subunit protein uS19 of Albidiferax ferrireducens (strain ATCC BAA-621 / DSM 15236 / T118) (Rhodoferax ferrireducens).